The following is a 416-amino-acid chain: tRNA(Met) cytidine acetate ligase (416 aa).

Residues 7-20 (VVEY…HLYH), Gly-101, Asn-163, and Arg-188 each bind ATP.

Belongs to the TmcAL family.

Its subcellular location is the cytoplasm. The catalysed reaction is cytidine(34) in elongator tRNA(Met) + acetate + ATP = N(4)-acetylcytidine(34) in elongator tRNA(Met) + AMP + diphosphate. Its function is as follows. Catalyzes the formation of N(4)-acetylcytidine (ac(4)C) at the wobble position of elongator tRNA(Met), using acetate and ATP as substrates. First activates an acetate ion to form acetyladenylate (Ac-AMP) and then transfers the acetyl group to tRNA to form ac(4)C34. In Bacillus licheniformis (strain ATCC 14580 / DSM 13 / JCM 2505 / CCUG 7422 / NBRC 12200 / NCIMB 9375 / NCTC 10341 / NRRL NRS-1264 / Gibson 46), this protein is tRNA(Met) cytidine acetate ligase.